We begin with the raw amino-acid sequence, 211 residues long: Cell division protein SepF (211 aa).

Over residues D15–V26 the composition is skewed to acidic residues. Positions D15 to Q111 are disordered. Polar residues-rich tracts occupy residues I44–A57, A64–Q81, and R91–Q111.

The protein belongs to the SepF family. In terms of assembly, homodimer. Interacts with FtsZ.

The protein resides in the cytoplasm. Functionally, cell division protein that is part of the divisome complex and is recruited early to the Z-ring. Probably stimulates Z-ring formation, perhaps through the cross-linking of FtsZ protofilaments. Its function overlaps with FtsA. This Streptococcus uberis (strain ATCC BAA-854 / 0140J) protein is Cell division protein SepF.